The following is a 247-amino-acid chain: 2,3-bisphosphoglycerate-dependent phosphoglycerate mutase (247 aa).

Substrate contacts are provided by residues 8 to 15, 21 to 22, Arg-60, 87 to 90, Lys-98, 114 to 115, and 183 to 184; these read RHGESQWN, TG, ERHY, RR, and GN. Residue His-9 is the Tele-phosphohistidine intermediate of the active site. Glu-87 serves as the catalytic Proton donor/acceptor.

Belongs to the phosphoglycerate mutase family. BPG-dependent PGAM subfamily.

It catalyses the reaction (2R)-2-phosphoglycerate = (2R)-3-phosphoglycerate. It participates in carbohydrate degradation; glycolysis; pyruvate from D-glyceraldehyde 3-phosphate: step 3/5. In terms of biological role, catalyzes the interconversion of 2-phosphoglycerate and 3-phosphoglycerate. This Chlorobium phaeovibrioides (strain DSM 265 / 1930) (Prosthecochloris vibrioformis (strain DSM 265)) protein is 2,3-bisphosphoglycerate-dependent phosphoglycerate mutase.